Here is a 33-residue protein sequence, read N- to C-terminus: MNLEVVAQLTVLALIVVSGPLVIGLLALRKGNL.

Residues 5–25 (VVAQLTVLALIVVSGPLVIGL) traverse the membrane as a helical segment.

The protein belongs to the Psb30/Ycf12 family. PSII is composed of 1 copy each of membrane proteins PsbA, PsbB, PsbC, PsbD, PsbE, PsbF, PsbH, PsbI, PsbJ, PsbK, PsbL, PsbM, PsbT, PsbX, PsbY, PsbZ, Psb30/Ycf12, peripheral proteins of the oxygen-evolving complex and a large number of cofactors. It forms dimeric complexes.

It localises to the plastid. The protein resides in the chloroplast thylakoid membrane. A core subunit of photosystem II (PSII), probably helps stabilize the reaction center. The protein is Photosystem II reaction center protein Psb30 of Zygnema circumcarinatum (Green alga).